The primary structure comprises 211 residues: Thymidylate kinase (211 aa).

10–17 (GVEGCGKT) is an ATP binding site.

It belongs to the thymidylate kinase family.

It carries out the reaction dTMP + ATP = dTDP + ADP. Functionally, phosphorylation of dTMP to form dTDP in both de novo and salvage pathways of dTTP synthesis. The polypeptide is Thymidylate kinase (Trichormus variabilis (strain ATCC 29413 / PCC 7937) (Anabaena variabilis)).